A 736-amino-acid chain; its full sequence is Orphan sodium- and chloride-dependent neurotransmitter transporter NTT5 (736 aa).

Residues 1–138 lie on the Cytoplasmic side of the membrane; that stretch reads MKTEAQPSTS…FAYLWLNSGG (138 aa). 3 helical membrane passes run 139-159, 177-197, and 199-219; these read CSFA…LLFL, IIAP…FILG, and YFNV…QFPV. The Extracellular portion of the chain corresponds to 220–263; it reads PWEKCPLTMNSSGFDPECERTTPSIYFWYQQALKASDRIEDGGS. A glycan (N-linked (GlcNAc...) asparagine) is linked at asparagine 229. Helical transmembrane passes span 264-284, 290-310, 338-358, and 383-403; these read PVYS…AFMI, TGKV…GFFI, VWSL…GSVA, and LTLL…ATVI. Residues 404 to 495 lie on the Extracellular side of the membrane; the sequence is THRCCERNAE…EAMSFLPPSV (92 aa). A run of 5 helical transmembrane segments spans residues 496–516, 534–554, 568–588, 609–629, and 659–679; these read FWSF…AIGI, HTKL…LFFT, YWIV…VSWA, IFGW…FVTM, and ALLL…AYFV. Topologically, residues 680–736 are cytoplasmic; sequence YCRIHRIPFRPKSGDGPMTASTSLPLSHQLTPSKEVQKEEILQVDETKYPSTCNVTS.

This sequence belongs to the sodium:neurotransmitter symporter (SNF) (TC 2.A.22) family. SLC6A16 subfamily. In terms of tissue distribution, highly expressed in peripheral tissues, particularly in testis, pancreas, and prostate.

The protein localises to the membrane. In Homo sapiens (Human), this protein is Orphan sodium- and chloride-dependent neurotransmitter transporter NTT5 (SLC6A16).